Consider the following 655-residue polypeptide: Very long-chain specific acyl-CoA dehydrogenase, mitochondrial (655 aa).

A mitochondrion-targeting transit peptide spans 1-40 (MQSARMTPSVGRQLLRLGARSSRSAALQGQPRPTSAQRLY). Residues 1–70 (MQSARMTPSV…TREKPARAES (70 aa)) form a disordered region. The segment covering 21 to 37 (SSRSAALQGQPRPTSAQ) has biased composition (polar residues). Residues 41-482 (ASEATQAVLE…ALQGCMDKGK (442 aa)) form a catalytic region. An N6-acetyllysine modification is found at K51. A compositionally biased stretch (basic and acidic residues) spans 60 to 70 (STREKPARAES). K71 and K127 each carry N6-acetyllysine; alternate. 2 positions are modified to N6-succinyllysine; alternate: K71 and K127. Position 195 is an N6-succinyllysine (K195). An FAD-binding site is contributed by 214-223 (FCLTEPSSGS). C237 carries the S-nitrosocysteine modification. N6-acetyllysine; alternate is present on K239. K239 carries the N6-succinyllysine; alternate modification. Residue 249 to 251 (WIS) coordinates FAD. K268 bears the N6-succinyllysine mark. K276 and K278 each carry N6-acetyllysine; alternate. 2 positions are modified to N6-succinyllysine; alternate: K276 and K278. Residues K298 and K316 each carry the N6-acetyllysine modification. An N6-acetyllysine; alternate modification is found at K331. N6-succinyllysine; alternate is present on K331. An N6-succinyllysine modification is found at K372. 461-463 (FEG) serves as a coordination point for substrate. The Proton acceptor role is filled by E462. 464 to 466 (TND) serves as a coordination point for FAD. K482 bears the N6-acetyllysine; alternate mark. K482 bears the N6-succinyllysine; alternate mark. Residues 483-516 (ELTGLGNALKNPLGNVGLLIGEASKQLRRRTGIG) are membrane-anchoring. S517 and S522 each carry phosphoserine. The residue at position 550 (K550) is an N6-acetyllysine. Residue K556 is modified to N6-acetyllysine; alternate. K556 is subject to N6-succinyllysine; alternate. Residue Q562 coordinates FAD. Position 639 is an N6-succinyllysine (K639).

Belongs to the acyl-CoA dehydrogenase family. As to quaternary structure, homodimer. Homodimerizes after import into the mitochondrion. It depends on FAD as a cofactor. In terms of processing, S-nitrosylation at Cys-237 in liver improves catalytic efficiency. In terms of tissue distribution, widely expressed (at protein level).

It localises to the mitochondrion inner membrane. It catalyses the reaction a very-long-chain 2,3-saturated fatty acyl-CoA + oxidized [electron-transfer flavoprotein] + H(+) = a very-long-chain (2E)-enoyl-CoA + reduced [electron-transfer flavoprotein]. It carries out the reaction dodecanoyl-CoA + oxidized [electron-transfer flavoprotein] + H(+) = (2E)-dodecenoyl-CoA + reduced [electron-transfer flavoprotein]. The enzyme catalyses tetradecanoyl-CoA + oxidized [electron-transfer flavoprotein] + H(+) = (2E)-tetradecenoyl-CoA + reduced [electron-transfer flavoprotein]. The catalysed reaction is oxidized [electron-transfer flavoprotein] + hexadecanoyl-CoA + H(+) = (2E)-hexadecenoyl-CoA + reduced [electron-transfer flavoprotein]. It catalyses the reaction octadecanoyl-CoA + oxidized [electron-transfer flavoprotein] + H(+) = (2E)-octadecenoyl-CoA + reduced [electron-transfer flavoprotein]. It carries out the reaction eicosanoyl-CoA + oxidized [electron-transfer flavoprotein] + H(+) = (2E)-eicosenoyl-CoA + reduced [electron-transfer flavoprotein]. The enzyme catalyses docosanoyl-CoA + oxidized [electron-transfer flavoprotein] + H(+) = (2E)-docosenoyl-CoA + reduced [electron-transfer flavoprotein]. The catalysed reaction is tetracosanoyl-CoA + oxidized [electron-transfer flavoprotein] + H(+) = (2E)-tetracosenoyl-CoA + reduced [electron-transfer flavoprotein]. The protein operates within lipid metabolism; mitochondrial fatty acid beta-oxidation. Its function is as follows. Very long-chain specific acyl-CoA dehydrogenase is one of the acyl-CoA dehydrogenases that catalyze the first step of mitochondrial fatty acid beta-oxidation, an aerobic process breaking down fatty acids into acetyl-CoA and allowing the production of energy from fats. The first step of fatty acid beta-oxidation consists in the removal of one hydrogen from C-2 and C-3 of the straight-chain fatty acyl-CoA thioester, resulting in the formation of trans-2-enoyl-CoA. Among the different mitochondrial acyl-CoA dehydrogenases, very long-chain specific acyl-CoA dehydrogenase acts specifically on acyl-CoAs with saturated 12 to 24 carbons long primary chains. The polypeptide is Very long-chain specific acyl-CoA dehydrogenase, mitochondrial (Rattus norvegicus (Rat)).